An 88-amino-acid chain; its full sequence is Alpha-conotoxin GVIIIB (88 aa).

The signal sequence occupies residues 1–20; it reads MMSKMGAMFVLLLLFTLASS. A propeptide spanning residues 21 to 43 is cleaved from the precursor; sequence QQEGDVQARKTRPKSDFYRALPR. Threonine amide is present on Thr87.

The protein belongs to the conotoxin S superfamily. Post-translationally, contains 5 disulfide bonds. In terms of processing, the predominant peptide contains 2 hydroxyprolines, while 2 minor peptides contains 1 and 3 hydroxyprolines. As to expression, expressed by the venom duct.

The protein localises to the secreted. Alpha-conotoxins act on postsynaptic membranes, they bind to the nicotinic acetylcholine receptors (nAChR) and thus inhibit them. This toxin shows high activity on alpha-9-alpha-10 (CHRNA9-CHRNA10) (IC(50)=9.79 nM). It also shows weak activity on alpha-3-beta-2 (CHRNA3-CHRNB2) (IC(50)~1 uM), alpha-6/alpha-3-beta-2-beta-3 (CHRNA6/CHRNA3-CHRNB2-CHRNB3) (IC(50)~1 uM). The toxin binds to the same or overlapping binding sites than conotoxin RgIA (AC P0C1D0). The chain is Alpha-conotoxin GVIIIB from Conus geographus (Geography cone).